The primary structure comprises 290 residues: ATP synthase gamma chain (290 aa).

Belongs to the ATPase gamma chain family. F-type ATPases have 2 components, CF(1) - the catalytic core - and CF(0) - the membrane proton channel. CF(1) has five subunits: alpha(3), beta(3), gamma(1), delta(1), epsilon(1). CF(0) has three main subunits: a, b and c.

It localises to the cell inner membrane. Functionally, produces ATP from ADP in the presence of a proton gradient across the membrane. The gamma chain is believed to be important in regulating ATPase activity and the flow of protons through the CF(0) complex. The chain is ATP synthase gamma chain from Bradyrhizobium diazoefficiens (strain JCM 10833 / BCRC 13528 / IAM 13628 / NBRC 14792 / USDA 110).